Here is a 313-residue protein sequence, read N- to C-terminus: Alpha-S1-casein (313 aa).

Residues 1 to 15 (MKLLILTCLVAAAFA) form the signal peptide. Over residues 77–96 (ASEEQAMASAQEDSSISSSS) the composition is skewed to low complexity. The tract at residues 77-111 (ASEEQAMASAQEDSSISSSSEESEEAIPNITEQKN) is disordered. Residues S90, S91, S93, S94, S95, and S96 each carry the phosphoserine modification. 15 consecutive repeat copies span residues 135–140 (LLQKAS), 141–146 (LAKQAS), 147–152 (LFQQPS), 153–158 (LVQQAS), 159–164 (LFQQPS), 165–170 (LLQQAS), 171–176 (LFQQPS), 177–182 (MAQQAS), 183–188 (LLQQLL), 189–194 (LAQQPS), 195–200 (LALQVS), 201–206 (PAQQSS), 207–212 (LVQQAF), 213–218 (LAQQAS), and 219–224 (LAQKHH). Residues 135–224 (LLQKASLAKQ…QQASLAQKHH (90 aa)) form a 15 X 6 AA tandem repeats region.

This sequence belongs to the alpha-casein family. As to expression, mammary gland specific. Secreted in milk.

Its subcellular location is the secreted. Important role in the capacity of milk to transport calcium phosphate. In Mus musculus (Mouse), this protein is Alpha-S1-casein (Csn1s1).